The following is a 286-amino-acid chain: Polygalacturonan/rhamnogalacturonan transport system permease protein YtcP (286 aa).

A run of 6 helical transmembrane segments spans residues 9-29, 69-89, 106-126, 131-151, 176-196, and 251-271; these read LIYG…IHVI, LLVS…LSSL, MFLV…FLVV, LLDS…NLII, GIFF…ISLF, and TIKM…YPFI. Residues 69–271 form the ABC transmembrane type-1 domain; it reads LLVSVFVTVI…IPVLLVYPFI (203 aa).

Belongs to the binding-protein-dependent transport system permease family. CysTW subfamily. The complex is probably composed of two ATP-binding proteins (MsmX), two transmembrane proteins (YtcP and YteP) and a solute-binding protein (YtcQ).

It is found in the cell membrane. Functionally, involved in pectin degradation. Part of the ABC transporter complex YtcQP-YteP involved in the uptake of polygalacturonan and rhamnogalacturonan type I. Responsible for the translocation of the substrate across the membrane. This chain is Polygalacturonan/rhamnogalacturonan transport system permease protein YtcP (ytcP), found in Bacillus subtilis (strain 168).